The sequence spans 240 residues: Ribonuclease PH (240 aa).

Phosphate is bound by residues R87 and 125-127 (GTR).

It belongs to the RNase PH family. Homohexameric ring arranged as a trimer of dimers.

It catalyses the reaction tRNA(n+1) + phosphate = tRNA(n) + a ribonucleoside 5'-diphosphate. Functionally, phosphorolytic 3'-5' exoribonuclease that plays an important role in tRNA 3'-end maturation. Removes nucleotide residues following the 3'-CCA terminus of tRNAs; can also add nucleotides to the ends of RNA molecules by using nucleoside diphosphates as substrates, but this may not be physiologically important. Probably plays a role in initiation of 16S rRNA degradation (leading to ribosome degradation) during starvation. This chain is Ribonuclease PH, found in Pseudomonas putida (strain GB-1).